A 103-amino-acid chain; its full sequence is Large ribosomal subunit protein bL21 (103 aa).

This sequence belongs to the bacterial ribosomal protein bL21 family. As to quaternary structure, part of the 50S ribosomal subunit. Contacts protein L20.

In terms of biological role, this protein binds to 23S rRNA in the presence of protein L20. This Chromohalobacter salexigens (strain ATCC BAA-138 / DSM 3043 / CIP 106854 / NCIMB 13768 / 1H11) protein is Large ribosomal subunit protein bL21.